Reading from the N-terminus, the 750-residue chain is Photosystem I P700 chlorophyll a apoprotein A1 (750 aa).

The next 8 membrane-spanning stretches (helical) occupy residues 70-93, 156-179, 195-219, 291-309, 346-369, 385-411, 433-455, and 531-549; these read VFSA…FHGA, LYCT…FHYH, LNHH…HVSL, IVHH…GHMY, WHAQ…HHMY, LSLF…IFMV, AIIS…LYIH, and FLVH…LILL. Residues Cys-573 and Cys-582 each coordinate [4Fe-4S] cluster. Helical transmembrane passes span 589–610 and 664–686; these read HVFL…HFSW and LSAY…MFLF. A chlorophyll a'-binding site is contributed by His-675. Residues Met-683 and Tyr-691 each contribute to the chlorophyll a site. Trp-692 serves as a coordination point for phylloquinone. The chain crosses the membrane as a helical span at residues 724–744; it reads AVGVTHYLLGGIATTWAFFLA.

The protein belongs to the PsaA/PsaB family. The PsaA/B heterodimer binds the P700 chlorophyll special pair and subsequent electron acceptors. PSI consists of a core antenna complex that captures photons, and an electron transfer chain that converts photonic excitation into a charge separation. The eukaryotic PSI reaction center is composed of at least 11 subunits. P700 is a chlorophyll a/chlorophyll a' dimer, A0 is one or more chlorophyll a, A1 is one or both phylloquinones and FX is a shared 4Fe-4S iron-sulfur center. serves as cofactor.

The protein resides in the plastid. The protein localises to the chloroplast thylakoid membrane. The enzyme catalyses reduced [plastocyanin] + hnu + oxidized [2Fe-2S]-[ferredoxin] = oxidized [plastocyanin] + reduced [2Fe-2S]-[ferredoxin]. Functionally, psaA and PsaB bind P700, the primary electron donor of photosystem I (PSI), as well as the electron acceptors A0, A1 and FX. PSI is a plastocyanin-ferredoxin oxidoreductase, converting photonic excitation into a charge separation, which transfers an electron from the donor P700 chlorophyll pair to the spectroscopically characterized acceptors A0, A1, FX, FA and FB in turn. Oxidized P700 is reduced on the lumenal side of the thylakoid membrane by plastocyanin. The protein is Photosystem I P700 chlorophyll a apoprotein A1 of Piper cenocladum (Ant piper).